Consider the following 320-residue polypeptide: Malate dehydrogenase (320 aa).

Residues 10–15 (GAGNIG) and aspartate 34 each bind NAD(+). Residues arginine 83 and arginine 89 each contribute to the substrate site. NAD(+)-binding positions include asparagine 96 and 119–121 (ITN). Asparagine 121 and arginine 152 together coordinate substrate. Residue histidine 176 is the Proton acceptor of the active site.

This sequence belongs to the LDH/MDH superfamily. MDH type 3 family.

The enzyme catalyses (S)-malate + NAD(+) = oxaloacetate + NADH + H(+). Functionally, catalyzes the reversible oxidation of malate to oxaloacetate. This is Malate dehydrogenase from Sphingopyxis alaskensis (strain DSM 13593 / LMG 18877 / RB2256) (Sphingomonas alaskensis).